The chain runs to 362 residues: Phosphoserine aminotransferase (362 aa).

Arg-42 provides a ligand contact to L-glutamate. Residues 76-77, Trp-102, Thr-152, Asp-172, and Gln-195 each bind pyridoxal 5'-phosphate; that span reads AR. The residue at position 196 (Lys-196) is an N6-(pyridoxal phosphate)lysine. Pyridoxal 5'-phosphate is bound at residue 237 to 238; that stretch reads NT.

This sequence belongs to the class-V pyridoxal-phosphate-dependent aminotransferase family. SerC subfamily. As to quaternary structure, homodimer. The cofactor is pyridoxal 5'-phosphate.

It localises to the cytoplasm. It carries out the reaction O-phospho-L-serine + 2-oxoglutarate = 3-phosphooxypyruvate + L-glutamate. The catalysed reaction is 4-(phosphooxy)-L-threonine + 2-oxoglutarate = (R)-3-hydroxy-2-oxo-4-phosphooxybutanoate + L-glutamate. Its pathway is amino-acid biosynthesis; L-serine biosynthesis; L-serine from 3-phospho-D-glycerate: step 2/3. It participates in cofactor biosynthesis; pyridoxine 5'-phosphate biosynthesis; pyridoxine 5'-phosphate from D-erythrose 4-phosphate: step 3/5. In terms of biological role, catalyzes the reversible conversion of 3-phosphohydroxypyruvate to phosphoserine and of 3-hydroxy-2-oxo-4-phosphonooxybutanoate to phosphohydroxythreonine. The chain is Phosphoserine aminotransferase from Haemophilus influenzae (strain ATCC 51907 / DSM 11121 / KW20 / Rd).